The chain runs to 305 residues: Homoserine kinase (305 aa).

95 to 105 contacts ATP; it reads PHGRGLGSSSA.

It belongs to the GHMP kinase family. Homoserine kinase subfamily.

Its subcellular location is the cytoplasm. It carries out the reaction L-homoserine + ATP = O-phospho-L-homoserine + ADP + H(+). It participates in amino-acid biosynthesis; L-threonine biosynthesis; L-threonine from L-aspartate: step 4/5. Catalyzes the ATP-dependent phosphorylation of L-homoserine to L-homoserine phosphate. The protein is Homoserine kinase of Streptomyces avermitilis (strain ATCC 31267 / DSM 46492 / JCM 5070 / NBRC 14893 / NCIMB 12804 / NRRL 8165 / MA-4680).